A 731-amino-acid polypeptide reads, in one-letter code: EF-hand calcium-binding domain-containing protein 4B (731 aa).

Residues 1 to 45 (MAAPDGRVVSRPQRLGQGSGQGPKGSGACLHPLDSLEQKETQEQT) form a disordered region. The EF-hand domain maps to 84 to 119 (LSLEELEDVFDALDADGNGYLTPQEFTTGFSHFFFS). 5 residues coordinate Ca(2+): aspartate 97, aspartate 99, asparagine 101, tyrosine 103, and glutamate 108. Residues 201–382 (LTRIISQLQE…RERNKHLRDE (182 aa)) adopt a coiled-coil conformation. The segment at 349-540 (MEVYRVTESL…ALCKEESSPS (192 aa)) is proline-rich domain (PRD) which mediates interaction with VAV1. Disordered stretches follow at residues 426–466 (SEEE…PYPR) and 494–528 (CSEE…QPVG). Residues serine 554, valine 556, glycine 557, lysine 558, threonine 559, serine 560, serine 571, proline 572, and threonine 577 each coordinate GTP. Residue threonine 559 participates in Mg(2+) binding. The switch-I stretch occupies residues 572-580 (PGMAATVGI). The Mg(2+) site is built by threonine 577 and aspartate 600. Positions 603, 658, 659, 661, and 689 each coordinate GTP. Positions 603–619 (GQERYRCITQQFFRKAD) are switch-II. Cysteine 729 carries the S-geranylgeranyl cysteine lipid modification.

Belongs to the EFCAB4 family. As to quaternary structure, interacts with ORAI1 and STIM1; the interaction is direct and takes place in absence of Ca(2+). Forms a complex with ORAI1 and STIM1 at low concentration of Ca(2+), the complex dissociates at elevated Ca(2+) concentrations. Interacts with ORAI2 and ORAI3. In terms of assembly, interacts with DYNC1H1. Interacts with the dynein-dynactin complex in a Ca(2+)-dependent manner. Interacts with VAV1. Mg(2+) serves as cofactor. As to expression, expressed in the Jurkat T-cell line. Expressed in endothelial cells. Expressed in Weibel-Palade bodies (which are P-selectin/SELP negative) in endothelial cells. Expressed in the Jurkat T-cell line.

Its subcellular location is the cytoplasm. It is found in the cytoskeleton. The protein localises to the microtubule organizing center. It localises to the cell membrane. The protein resides in the golgi apparatus membrane. Its subcellular location is the golgi apparatus. It is found in the trans-Golgi network membrane. The protein localises to the vesicle. The enzyme catalyses GTP + H2O = GDP + phosphate + H(+). Its function is as follows. Ca(2+)-binding protein that plays a key role in store-operated Ca(2+) entry (SOCE) in T-cells by regulating CRAC channel activation. Acts as a cytoplasmic calcium-sensor that facilitates the clustering of ORAI1 and STIM1 at the junctional regions between the plasma membrane and the endoplasmic reticulum upon low Ca(2+) concentration. It thereby regulates CRAC channel activation, including translocation and clustering of ORAI1 and STIM1. Upon increase of cytoplasmic Ca(2+) resulting from opening of CRAC channels, dissociates from ORAI1 and STIM1, thereby destabilizing the ORAI1-STIM1 complex. Functionally, rab GTPase that mediates the trafficking of Weibel-Palade bodies (WPBs) to microtubule organizing center (MTOC) in endothelial cells in response to acute inflammatory stimuli. During histamine (but not thrombin) stimulation of endothelial cells, the dynein-bound form induces retrograde transport of a subset of WPBs along microtubules to the MTOC in a Ca(2+)-independent manner and its GTPase activity is essential for this function. Ca(2+)-regulated dynein adapter protein that activates dynein-mediated transport and dynein-dynactin motility on microtubules and regulates endosomal trafficking of CD47. Acts as an intracellular signaling module bridging two important T-cell receptor (TCR) signaling pathways, Ca(2+)-NFAT and JNK, to affect T-cell activation. In resting T-cells, is predominantly localized near TGN network in a GTP-bound form, upon TCR stimulation, localizes at the immunological synapse via interaction with VAV1 to activate downstream Ca(2+)-NFAT and JNK signaling pathways. Plays a role in T-helper 1 (Th1) cell differentiation and T-helper 17 (Th17) cell effector function. Plays a role in store-operated Ca(2+) entry (SOCE) in T-cells by regulating CRAC channel activation. This Homo sapiens (Human) protein is EF-hand calcium-binding domain-containing protein 4B.